The following is a 406-amino-acid chain: Histone-lysine N-methyltransferase SUV39H2 (406 aa).

Residues 43–101 (YEVEYLCDYRIEKGVEKFFVKWKGWPESCNTWEPTRNLKCPTLLKQFYSDLYNYFCALK) form the Chromo domain. A Pre-SET domain is found at 185-243 (VGCDCSDCFKGKCCPTEAGVLFAYNEHRQIKIPPGRPIYECNSRCKCGPDCPNRVVQKG). Zn(2+)-binding residues include Cys-187, Cys-189, Cys-192, Cys-197, Cys-198, Cys-225, Cys-229, Cys-231, and Cys-235. The 124-residue stretch at 246–369 (YSLCIFRTDN…AGEELTFDYQ (124 aa)) folds into the SET domain. S-adenosyl-L-methionine contacts are provided by residues 257–259 (RGW), Tyr-300, and 326–327 (NH). 4 residues coordinate Zn(2+): Cys-329, Cys-394, Cys-396, and Cys-401. A Post-SET domain is found at 390-406 (VRIACKCGAATCRGYLN).

Belongs to the class V-like SAM-binding methyltransferase superfamily. Histone-lysine methyltransferase family. Suvar3-9 subfamily.

The protein resides in the nucleus. The protein localises to the chromosome. Its subcellular location is the centromere. The enzyme catalyses L-lysyl(9)-[histone H3] + 3 S-adenosyl-L-methionine = N(6),N(6),N(6)-trimethyl-L-lysyl(9)-[histone H3] + 3 S-adenosyl-L-homocysteine + 3 H(+). Histone methyltransferase that specifically trimethylates 'Lys-9' of histone H3 using monomethylated H3 'Lys-9' as substrate. H3 'Lys-9' trimethylation represents a specific tag for epigenetic transcriptional repression by recruiting HP1 (CBX1, CBX3 and/or CBX5) proteins to methylated histones. Mainly functions in heterochromatin regions, thereby playing a central role in the establishment of constitutive heterochromatin at pericentric and telomere regions. H3 'Lys-9' trimethylation is also required to direct DNA methylation at pericentric repeats. SUV39H1 is targeted to histone H3 via its interaction with RB1 and is involved in many processes. The chain is Histone-lysine N-methyltransferase SUV39H2 (suv39h2) from Xenopus tropicalis (Western clawed frog).